The sequence spans 408 residues: Peptidase T (408 aa).

His79 is a Zn(2+) binding site. Asp81 is a catalytic residue. Zn(2+) is bound at residue Asp139. Residue Glu173 is the Proton acceptor of the active site. Residues Glu174, Asp196, and His378 each contribute to the Zn(2+) site.

It belongs to the peptidase M20B family. The cofactor is Zn(2+).

The protein localises to the cytoplasm. The enzyme catalyses Release of the N-terminal residue from a tripeptide.. Its function is as follows. Cleaves the N-terminal amino acid of tripeptides. The sequence is that of Peptidase T from Shouchella clausii (strain KSM-K16) (Alkalihalobacillus clausii).